Here is a 251-residue protein sequence, read N- to C-terminus: CCN family member 5 (251 aa).

The first 23 residues, 1–23 (MRGNPLIHLLAISFLCILSMVYS), serve as a signal peptide directing secretion. Residues 24-103 (QLCPAPCACP…EEDDGSCEVN (80 aa)) enclose the IGFBP N-terminal domain. Intrachain disulfides connect cysteine 26–cysteine 50, cysteine 30–cysteine 52, cysteine 32–cysteine 53, cysteine 39–cysteine 56, cysteine 64–cysteine 78, and cysteine 70–cysteine 100. Residues 98-164 (GSCEVNGRRY…GRCCPEWVCD (67 aa)) enclose the VWFC domain. The TSP type-1 domain occupies 195-239 (CPNWSTAWGPCSTTCGLGIATRVSNQNRFCQLEIQRRLCLSRPCL). N-linked (GlcNAc...) asparagine glycosylation is present at asparagine 197.

Belongs to the CCN family.

Its subcellular location is the secreted. May play an important role in modulating bone turnover. Promotes the adhesion of osteoblast cells and inhibits the binding of fibrinogen to integrin receptors. In addition, inhibits osteocalcin production. This Mus musculus (Mouse) protein is CCN family member 5 (Ccn5).